We begin with the raw amino-acid sequence, 165 residues long: UPF0262 protein Sala_0765 (165 aa).

The protein belongs to the UPF0262 family.

The sequence is that of UPF0262 protein Sala_0765 from Sphingopyxis alaskensis (strain DSM 13593 / LMG 18877 / RB2256) (Sphingomonas alaskensis).